Consider the following 249-residue polypeptide: Type III pantothenate kinase (249 aa).

6–13 (DVGNTHTT) contributes to the ATP binding site. 101-104 (GADR) serves as a coordination point for substrate. Aspartate 103 functions as the Proton acceptor in the catalytic mechanism. Residue aspartate 123 participates in K(+) binding. Threonine 126 is a binding site for ATP. A substrate-binding site is contributed by threonine 177.

The protein belongs to the type III pantothenate kinase family. As to quaternary structure, homodimer. Requires NH4(+) as cofactor. K(+) is required as a cofactor.

It is found in the cytoplasm. The catalysed reaction is (R)-pantothenate + ATP = (R)-4'-phosphopantothenate + ADP + H(+). It participates in cofactor biosynthesis; coenzyme A biosynthesis; CoA from (R)-pantothenate: step 1/5. Functionally, catalyzes the phosphorylation of pantothenate (Pan), the first step in CoA biosynthesis. The chain is Type III pantothenate kinase from Thermosipho africanus (strain TCF52B).